We begin with the raw amino-acid sequence, 324 residues long: Cyclin-dependent kinase 1 (324 aa).

One can recognise a Protein kinase domain in the interval 4–307 (YQKIEKIGEG…AKQACMHPYF (304 aa)). ATP contacts are provided by residues 10–18 (IGEGTYGVV) and Lys-34. Phosphothreonine is present on Thr-14. Tyr-15 is modified (phosphotyrosine). The Proton acceptor role is filled by Asp-148. Thr-181 is subject to Phosphothreonine; by CAK.

It belongs to the protein kinase superfamily. CMGC Ser/Thr protein kinase family. CDC2/CDKX subfamily. In terms of assembly, forms a stable but non-covalent complex with a regulatory subunit (SUC1) and with a cyclin.

The catalysed reaction is L-seryl-[protein] + ATP = O-phospho-L-seryl-[protein] + ADP + H(+). It catalyses the reaction L-threonyl-[protein] + ATP = O-phospho-L-threonyl-[protein] + ADP + H(+). Its activity is regulated as follows. Phosphorylation at Thr-14 or Tyr-15 inactivates the enzyme, while phosphorylation at Thr-181 activates it. Functionally, cyclin-dependent kinase that acts as a master regulator of the mitotic and meiotic cell cycles. The protein is Cyclin-dependent kinase 1 of Ajellomyces capsulatus (Darling's disease fungus).